The primary structure comprises 450 residues: Chromosomal replication initiator protein DnaA (450 aa).

The domain I, interacts with DnaA modulators stretch occupies residues 1 to 84 (MENIHDLWDR…AVKFIIPPNQ (84 aa)). Residues 84–111 (QADEKLELPSSAKKQRKPYEEANDFPQS) are domain II. Residues 112 to 328 (MLNPKYTFDT…GALIRVVAYS (217 aa)) are domain III, AAA+ region. 4 residues coordinate ATP: Gly-156, Gly-158, Lys-159, and Thr-160. The tract at residues 329–450 (SLINKEITAD…KEIQEKLKQL (122 aa)) is domain IV, binds dsDNA.

It belongs to the DnaA family. In terms of assembly, oligomerizes as a right-handed, spiral filament on DNA at oriC.

It localises to the cytoplasm. Its function is as follows. Plays an essential role in the initiation and regulation of chromosomal replication. ATP-DnaA binds to the origin of replication (oriC) to initiate formation of the DNA replication initiation complex once per cell cycle. Binds the DnaA box (a 9 base pair repeat at the origin) and separates the double-stranded (ds)DNA. Forms a right-handed helical filament on oriC DNA; dsDNA binds to the exterior of the filament while single-stranded (ss)DNA is stabiized in the filament's interior. The ATP-DnaA-oriC complex binds and stabilizes one strand of the AT-rich DNA unwinding element (DUE), permitting loading of DNA polymerase. After initiation quickly degrades to an ADP-DnaA complex that is not apt for DNA replication. Binds acidic phospholipids. This is Chromosomal replication initiator protein DnaA from Geobacillus thermodenitrificans (strain NG80-2).